Consider the following 498-residue polypeptide: Protein MGF 505-5R (498 aa).

This sequence belongs to the asfivirus MGF 505 family.

In terms of biological role, plays a role in virus cell tropism, and may be required for efficient virus replication in macrophages. The chain is Protein MGF 505-5R from Ornithodoros (relapsing fever ticks).